The following is a 180-amino-acid chain: NADH-quinone oxidoreductase subunit I (180 aa).

2 4Fe-4S ferredoxin-type domains span residues 50–80 (LTRD…LQKA) and 90–119 (EFFR…LTPD). [4Fe-4S] cluster contacts are provided by cysteine 60, cysteine 63, cysteine 66, cysteine 70, cysteine 99, cysteine 102, cysteine 105, and cysteine 109.

This sequence belongs to the complex I 23 kDa subunit family. In terms of assembly, NDH-1 is composed of 14 different subunits. Subunits NuoA, H, J, K, L, M, N constitute the membrane sector of the complex. [4Fe-4S] cluster serves as cofactor.

The protein localises to the cell inner membrane. It carries out the reaction a quinone + NADH + 5 H(+)(in) = a quinol + NAD(+) + 4 H(+)(out). Its function is as follows. NDH-1 shuttles electrons from NADH, via FMN and iron-sulfur (Fe-S) centers, to quinones in the respiratory chain. The immediate electron acceptor for the enzyme in this species is believed to be ubiquinone. Couples the redox reaction to proton translocation (for every two electrons transferred, four hydrogen ions are translocated across the cytoplasmic membrane), and thus conserves the redox energy in a proton gradient. This chain is NADH-quinone oxidoreductase subunit I, found in Acinetobacter baumannii (strain ACICU).